Reading from the N-terminus, the 375-residue chain is Metal tolerance protein B (375 aa).

Topologically, residues 1-57 (MELEQICILKPDDEEEMESPSPSKTEENLGVVPLSCAFTRQEHCVSETKEREESTRR) are cytoplasmic. Residues 58-78 (LSSLIFLYLIVMSVQIVGGFK) form a helical membrane-spanning segment. Residues 79–84 (ANSLAV) are Vacuolar-facing. A helical transmembrane segment spans residues 85–105 (MTDAAHLLSDVAGLCVSLLAI). Over 106–122 (KVSSWEANPRNSFGFKR) the chain is Cytoplasmic. Residues 123 to 143 (LEVLAAFLSVQLIWLVSGVII) traverse the membrane as a helical segment. Residues 144–160 (HEAIQRLLSRSREVNGE) are Vacuolar-facing. Residues 161-181 (IMFGISAFGFFMNLVMVLWLG) form a helical membrane-spanning segment. Residues 182–206 (HNHSHHHHDHHHHHHNHKHQHQHHH) form a required for zinc-binding region. At 182–240 (HNHSHHHHDHHHHHHNHKHQHQHHHKEVVAEEEEEEMNPLKGEKSSSKEMNINIQGAYL) the chain is on the cytoplasmic side. A helical membrane pass occupies residues 241 to 261 (HAMADMIQSLGVMIGGGIIWV). The Vacuolar segment spans residues 262 to 264 (KPK). The helical transmembrane segment at 265–285 (WVLVDLICTLVFSAFALAATL) threads the bilayer. Over 286-375 (PILKNIFGIL…YHATVQVESE (90 aa)) the chain is Cytoplasmic.

This sequence belongs to the cation diffusion facilitator (CDF) transporter (TC 2.A.4) family. SLC30A subfamily.

Its subcellular location is the vacuole membrane. Involved in sequestration of excess zinc in the cytoplasm into vacuoles to maintain zinc homeostasis. The polypeptide is Metal tolerance protein B (MTPB) (Arabidopsis thaliana (Mouse-ear cress)).